Here is a 422-residue protein sequence, read N- to C-terminus: Replication factor C large subunit (422 aa).

63 to 70 is an ATP binding site; it reads GPPGVGKT.

It belongs to the activator 1 small subunits family. RfcL subfamily. As to quaternary structure, heteromultimer composed of small subunits (RfcS) and large subunits (RfcL).

In terms of biological role, part of the RFC clamp loader complex which loads the PCNA sliding clamp onto DNA. The sequence is that of Replication factor C large subunit from Pyrobaculum arsenaticum (strain DSM 13514 / JCM 11321 / PZ6).